Here is a 472-residue protein sequence, read N- to C-terminus: Ribulose bisphosphate carboxylase large chain (472 aa).

2 residues coordinate substrate: N120 and T170. Residue K172 is the Proton acceptor of the active site. Residue K174 coordinates substrate. Mg(2+)-binding residues include K198, D200, and E201. K198 carries the N6-carboxylysine modification. H291 acts as the Proton acceptor in catalysis. Substrate contacts are provided by R292, H324, and S376. The Interacts with RbcX2 signature appears at 461 to 467; that stretch reads EIKFEFE.

Belongs to the RuBisCO large chain family. Type I subfamily. Heterohexadecamer of 8 large chains and 8 small chains; disulfide-linked. The disulfide link is formed within the large subunit homodimers. The exposed C-terminus binds in a cleft in the RbcX2 (shown with endogenous and Anabaena strain CA protein). RbcX2 is displaced by RbcS; as RbcX2 is removed RbcS mediates the ordering of an internal RbcL loop (Thr-64-Leu-70) in a catalytically active conformation. Requires Mg(2+) as cofactor. In terms of processing, the disulfide bond which can form in the large chain dimeric partners within the hexadecamer appears to be associated with oxidative stress and protein turnover.

It is found in the carboxysome. The enzyme catalyses 2 (2R)-3-phosphoglycerate + 2 H(+) = D-ribulose 1,5-bisphosphate + CO2 + H2O. The catalysed reaction is D-ribulose 1,5-bisphosphate + O2 = 2-phosphoglycolate + (2R)-3-phosphoglycerate + 2 H(+). In terms of biological role, ruBisCO catalyzes two reactions: the carboxylation of D-ribulose 1,5-bisphosphate, the primary event in carbon dioxide fixation, as well as the oxidative fragmentation of the pentose substrate in the photorespiration process. Both reactions occur simultaneously and in competition at the same active site. In Synechococcus sp. (strain ATCC 27144 / PCC 6301 / SAUG 1402/1) (Anacystis nidulans), this protein is Ribulose bisphosphate carboxylase large chain (cbbL).